The chain runs to 126 residues: Large ribosomal subunit protein uL22 (126 aa).

It belongs to the universal ribosomal protein uL22 family. In terms of assembly, part of the 50S ribosomal subunit.

This protein binds specifically to 23S rRNA; its binding is stimulated by other ribosomal proteins, e.g. L4, L17, and L20. It is important during the early stages of 50S assembly. It makes multiple contacts with different domains of the 23S rRNA in the assembled 50S subunit and ribosome. In terms of biological role, the globular domain of the protein is located near the polypeptide exit tunnel on the outside of the subunit, while an extended beta-hairpin is found that lines the wall of the exit tunnel in the center of the 70S ribosome. This Cereibacter sphaeroides (strain ATCC 17029 / ATH 2.4.9) (Rhodobacter sphaeroides) protein is Large ribosomal subunit protein uL22.